Consider the following 150-residue polypeptide: 3-hydroxyacyl-[acyl-carrier-protein] dehydratase FabZ (150 aa).

Residue His-52 is part of the active site.

Belongs to the thioester dehydratase family. FabZ subfamily.

Its subcellular location is the cytoplasm. It carries out the reaction a (3R)-hydroxyacyl-[ACP] = a (2E)-enoyl-[ACP] + H2O. In terms of biological role, involved in unsaturated fatty acids biosynthesis. Catalyzes the dehydration of short chain beta-hydroxyacyl-ACPs and long chain saturated and unsaturated beta-hydroxyacyl-ACPs. The sequence is that of 3-hydroxyacyl-[acyl-carrier-protein] dehydratase FabZ from Cupriavidus metallidurans (strain ATCC 43123 / DSM 2839 / NBRC 102507 / CH34) (Ralstonia metallidurans).